Consider the following 444-residue polypeptide: Tol-Pal system protein TolB (444 aa).

An N-terminal signal peptide occupies residues 1-18 (MKNIIYCILLLFSFNSYA).

It belongs to the TolB family. The Tol-Pal system is composed of five core proteins: the inner membrane proteins TolA, TolQ and TolR, the periplasmic protein TolB and the outer membrane protein Pal. They form a network linking the inner and outer membranes and the peptidoglycan layer.

It is found in the periplasm. In terms of biological role, part of the Tol-Pal system, which plays a role in outer membrane invagination during cell division and is important for maintaining outer membrane integrity. This is Tol-Pal system protein TolB from Rickettsia bellii (strain OSU 85-389).